The sequence spans 374 residues: Chaperone protein DnaJ (374 aa).

Residues 5-70 (DYYEVLGVAR…DKRARYDRFG (66 aa)) enclose the J domain. Residues 135–213 (GDEVTLRLPK…CKGSGILQQV (79 aa)) form a CR-type zinc finger. Residues cysteine 148, cysteine 151, cysteine 165, cysteine 168, cysteine 187, cysteine 190, cysteine 201, and cysteine 204 each coordinate Zn(2+). CXXCXGXG motif repeat units follow at residues 148–155 (CDECNGSG), 165–172 (CRHCGGNG), 187–194 (CPVCRGEG), and 201–208 (CPKCKGSG).

It belongs to the DnaJ family. Homodimer. Requires Zn(2+) as cofactor.

The protein resides in the cytoplasm. Participates actively in the response to hyperosmotic and heat shock by preventing the aggregation of stress-denatured proteins and by disaggregating proteins, also in an autonomous, DnaK-independent fashion. Unfolded proteins bind initially to DnaJ; upon interaction with the DnaJ-bound protein, DnaK hydrolyzes its bound ATP, resulting in the formation of a stable complex. GrpE releases ADP from DnaK; ATP binding to DnaK triggers the release of the substrate protein, thus completing the reaction cycle. Several rounds of ATP-dependent interactions between DnaJ, DnaK and GrpE are required for fully efficient folding. Also involved, together with DnaK and GrpE, in the DNA replication of plasmids through activation of initiation proteins. The polypeptide is Chaperone protein DnaJ (Nitratidesulfovibrio vulgaris (strain DSM 19637 / Miyazaki F) (Desulfovibrio vulgaris)).